The sequence spans 477 residues: Bifunctional protein HldE (477 aa).

Residues Met1–Thr318 are ribokinase. Lys179 bears the N6-acetyllysine mark. Asn195–Glu198 contributes to the ATP binding site. The active site involves Asp264. The cytidylyltransferase stretch occupies residues Met344–Gly477.

This sequence in the N-terminal section; belongs to the carbohydrate kinase PfkB family. It in the C-terminal section; belongs to the cytidylyltransferase family. As to quaternary structure, homodimer.

It catalyses the reaction D-glycero-beta-D-manno-heptose 7-phosphate + ATP = D-glycero-beta-D-manno-heptose 1,7-bisphosphate + ADP + H(+). The enzyme catalyses D-glycero-beta-D-manno-heptose 1-phosphate + ATP + H(+) = ADP-D-glycero-beta-D-manno-heptose + diphosphate. The protein operates within nucleotide-sugar biosynthesis; ADP-L-glycero-beta-D-manno-heptose biosynthesis; ADP-L-glycero-beta-D-manno-heptose from D-glycero-beta-D-manno-heptose 7-phosphate: step 1/4. It functions in the pathway nucleotide-sugar biosynthesis; ADP-L-glycero-beta-D-manno-heptose biosynthesis; ADP-L-glycero-beta-D-manno-heptose from D-glycero-beta-D-manno-heptose 7-phosphate: step 3/4. Its function is as follows. Catalyzes the phosphorylation of D-glycero-D-manno-heptose 7-phosphate at the C-1 position to selectively form D-glycero-beta-D-manno-heptose-1,7-bisphosphate. In terms of biological role, catalyzes the ADP transfer from ATP to D-glycero-beta-D-manno-heptose 1-phosphate, yielding ADP-D-glycero-beta-D-manno-heptose. The polypeptide is Bifunctional protein HldE (Shigella boydii serotype 18 (strain CDC 3083-94 / BS512)).